We begin with the raw amino-acid sequence, 125 residues long: Large ribosomal subunit protein bL12 (125 aa).

This sequence belongs to the bacterial ribosomal protein bL12 family. Homodimer. Part of the ribosomal stalk of the 50S ribosomal subunit. Forms a multimeric L10(L12)X complex, where L10 forms an elongated spine to which 2 to 4 L12 dimers bind in a sequential fashion. Binds GTP-bound translation factors.

Forms part of the ribosomal stalk which helps the ribosome interact with GTP-bound translation factors. Is thus essential for accurate translation. The polypeptide is Large ribosomal subunit protein bL12 (Syntrophomonas wolfei subsp. wolfei (strain DSM 2245B / Goettingen)).